Reading from the N-terminus, the 268-residue chain is Glutamine amidotransferase-like class 1 domain-containing protein 3, mitochondrial (268 aa).

The N-terminal 41 residues, 1–41 (MAAVRVLVASRLAAASAFTSLSPGGRTPSQRAALHLSVPRP), are a transit peptide targeting the mitochondrion. N6-acetyllysine is present on residues Lys151, Lys157, and Lys164. Lys203 is modified (N6-acetyllysine; alternate). An N6-succinyllysine; alternate modification is found at Lys203. The residue at position 219 (Lys219) is an N6-acetyllysine. N6-acetyllysine; alternate is present on residues Lys223 and Lys233. 2 positions are modified to N6-succinyllysine; alternate: Lys223 and Lys233.

Belongs to the GATD3 family.

The protein localises to the mitochondrion. This Homo sapiens (Human) protein is Glutamine amidotransferase-like class 1 domain-containing protein 3, mitochondrial.